The sequence spans 335 residues: Deoxyhypusine hydroxylase (335 aa).

HEAT-like PBS-type repeat units lie at residues 71–97 (LKHELAYCLGQTRNPESVPFLQQVAKD), 104–130 (CRHEAAEALGALGYEDSLEILKALRDN), 200–233 (LRYRAMFALRDLASPPDLPTATRAVEALAKGLKD), 238–264 (FRHEIAFVFGQLCHPASIPSLTEALSN), and 271–298 (VRHEAAEALGSLGDCEGVEETLRKFLND). Fe cation is bound by residues His73, Glu74, His106, and Glu107. Fe cation-binding residues include His240, Glu241, His273, and Glu274.

It belongs to the deoxyhypusine hydroxylase family. Requires Fe(2+) as cofactor.

Its subcellular location is the cytoplasm. The protein localises to the nucleus. The enzyme catalyses [eIF5A protein]-deoxyhypusine + AH2 + O2 = [eIF5A protein]-hypusine + A + H2O. It participates in protein modification; eIF5A hypusination. Functionally, catalyzes the hydroxylation of the N(6)-(4-aminobutyl)-L-lysine intermediate to form hypusine, an essential post-translational modification only found in mature eIF-5A factor. This Neosartorya fischeri (strain ATCC 1020 / DSM 3700 / CBS 544.65 / FGSC A1164 / JCM 1740 / NRRL 181 / WB 181) (Aspergillus fischerianus) protein is Deoxyhypusine hydroxylase (lia1).